Consider the following 216-residue polypeptide: Adenylate kinase (216 aa).

Residue Gly10–Thr15 coordinates ATP. The tract at residues Ser30–Val59 is NMP. AMP-binding positions include Thr31, Arg36, Gln57–Val59, and Gln92. The segment at Gly122 to Asp159 is LID. ATP-binding positions include Arg123 and Thr132–Tyr133. The AMP site is built by Arg156 and Arg167. Gln202 contacts ATP.

The protein belongs to the adenylate kinase family. In terms of assembly, monomer.

The protein resides in the cytoplasm. The enzyme catalyses AMP + ATP = 2 ADP. The protein operates within purine metabolism; AMP biosynthesis via salvage pathway; AMP from ADP: step 1/1. Catalyzes the reversible transfer of the terminal phosphate group between ATP and AMP. Plays an important role in cellular energy homeostasis and in adenine nucleotide metabolism. The chain is Adenylate kinase from Francisella philomiragia subsp. philomiragia (strain ATCC 25017 / CCUG 19701 / FSC 153 / O#319-036).